The primary structure comprises 162 residues: 2-C-methyl-D-erythritol 2,4-cyclodiphosphate synthase (162 aa).

The a divalent metal cation site is built by Asp12 and His14. 4-CDP-2-C-methyl-D-erythritol 2-phosphate-binding positions include 12–14 (DVH) and 38–39 (HS). His46 provides a ligand contact to a divalent metal cation. 4-CDP-2-C-methyl-D-erythritol 2-phosphate contacts are provided by residues 60-62 (DIG), 136-139 (TTTE), Phe143, and Arg146.

This sequence belongs to the IspF family. In terms of assembly, homotrimer. The cofactor is a divalent metal cation.

It catalyses the reaction 4-CDP-2-C-methyl-D-erythritol 2-phosphate = 2-C-methyl-D-erythritol 2,4-cyclic diphosphate + CMP. It participates in isoprenoid biosynthesis; isopentenyl diphosphate biosynthesis via DXP pathway; isopentenyl diphosphate from 1-deoxy-D-xylulose 5-phosphate: step 4/6. Involved in the biosynthesis of isopentenyl diphosphate (IPP) and dimethylallyl diphosphate (DMAPP), two major building blocks of isoprenoid compounds. Catalyzes the conversion of 4-diphosphocytidyl-2-C-methyl-D-erythritol 2-phosphate (CDP-ME2P) to 2-C-methyl-D-erythritol 2,4-cyclodiphosphate (ME-CPP) with a corresponding release of cytidine 5-monophosphate (CMP). The protein is 2-C-methyl-D-erythritol 2,4-cyclodiphosphate synthase of Porphyromonas gingivalis (strain ATCC BAA-308 / W83).